Here is a 332-residue protein sequence, read N- to C-terminus: Putative symporter YfeH (332 aa).

This sequence belongs to the bile acid:sodium symporter (BASS) (TC 2.A.28) family.

In Escherichia coli (strain K12), this protein is Putative symporter YfeH (yfeH).